Reading from the N-terminus, the 253-residue chain is Imidazole glycerol phosphate synthase subunit HisF (253 aa).

Active-site residues include D11 and D130.

This sequence belongs to the HisA/HisF family. Heterodimer of HisH and HisF.

Its subcellular location is the cytoplasm. The enzyme catalyses 5-[(5-phospho-1-deoxy-D-ribulos-1-ylimino)methylamino]-1-(5-phospho-beta-D-ribosyl)imidazole-4-carboxamide + L-glutamine = D-erythro-1-(imidazol-4-yl)glycerol 3-phosphate + 5-amino-1-(5-phospho-beta-D-ribosyl)imidazole-4-carboxamide + L-glutamate + H(+). The protein operates within amino-acid biosynthesis; L-histidine biosynthesis; L-histidine from 5-phospho-alpha-D-ribose 1-diphosphate: step 5/9. IGPS catalyzes the conversion of PRFAR and glutamine to IGP, AICAR and glutamate. The HisF subunit catalyzes the cyclization activity that produces IGP and AICAR from PRFAR using the ammonia provided by the HisH subunit. The chain is Imidazole glycerol phosphate synthase subunit HisF from Roseobacter denitrificans (strain ATCC 33942 / OCh 114) (Erythrobacter sp. (strain OCh 114)).